Reading from the N-terminus, the 311-residue chain is Mediator of RNA polymerase II transcription subunit 27-A (311 aa).

Belongs to the Mediator complex subunit 27 family. As to quaternary structure, component of the Mediator complex.

The protein resides in the nucleus. In terms of biological role, component of the Mediator complex, a coactivator involved in the regulated transcription of nearly all RNA polymerase II-dependent genes. Mediator functions as a bridge to convey information from gene-specific regulatory proteins to the basal RNA polymerase II transcription machinery. Mediator is recruited to promoters by direct interactions with regulatory proteins and serves as a scaffold for the assembly of a functional preinitiation complex with RNA polymerase II and the general transcription factors. This Xenopus laevis (African clawed frog) protein is Mediator of RNA polymerase II transcription subunit 27-A (med27-a).